We begin with the raw amino-acid sequence, 759 residues long: Protein hunchback (759 aa).

Disordered regions lie at residues 30 to 51 (EPGH…PIPS) and 171 to 215 (SSEK…EDMK). A compositionally biased stretch (polar residues) spans 39–51 (SVASSPRQSPIPS). Thr-179 carries the post-translational modification Phosphothreonine. Phosphoserine is present on residues Ser-189, Ser-208, Ser-210, and Ser-211. Positions 199–215 (EPEKEHDQMSNSSEDMK) are enriched in basic and acidic residues. C2H2-type zinc fingers lie at residues 241–263 (YKCK…TRTH), 270–292 (LQCP…IRKH), 298–320 (FQCD…RKSH), and 326–350 (YRCA…KYGH). Disordered regions lie at residues 366-419 (LVID…TSQL), 513-565 (QLQQ…PQQP), and 606-696 (MTSP…APAS). Composition is skewed to low complexity over residues 399–419 (VAAV…TSQL) and 513–522 (QLQQQNQQQS). The segment covering 523–532 (DNEEEEQDDE) has biased composition (acidic residues). Phosphoserine occurs at positions 537 and 540. Positions 655-696 (ANTSASSTASSSGNSSNASSNGNSSSNSSSNGTSSAAAAPAS) are enriched in low complexity. 2 C2H2-type zinc fingers span residues 706 to 728 (YECK…MGYH) and 734 to 758 (FKCN…RNAH).

This sequence belongs to the hunchback C2H2-type zinc-finger protein family.

It localises to the nucleus. Gap class segmentation protein that controls development of head structures. This Drosophila yakuba (Fruit fly) protein is Protein hunchback.